Here is an 805-residue protein sequence, read N- to C-terminus: Angiotensin-converting enzyme 2 (805 aa).

The N-terminal stretch at 1–17 (MSSSCWLLLSLVAVATA) is a signal peptide. The Extracellular portion of the chain corresponds to 18–740 (QSLIEEKAES…LKPPYEPPVT (723 aa)). Positions 19 to 607 (SLIEEKAESF…QNRNSTVGWS (589 aa)) constitute a Peptidase M2 domain. N-linked (GlcNAc...) asparagine glycosylation is found at N53, N82, and N90. C133 and C141 are oxidised to a cystine. R169 contacts chloride. Residue R273 participates in substrate binding. N299 carries N-linked (GlcNAc...) asparagine glycosylation. C344 and C361 form a disulfide bridge. Residue 345-346 (HP) participates in substrate binding. H374 serves as a coordination point for Zn(2+). E375 acts as the Proton acceptor in catalysis. H378 and E402 together coordinate Zn(2+). N-linked (GlcNAc...) asparagine glycosylation occurs at N432. Chloride is bound by residues W477 and K481. The active-site Proton donor is H505. Y515 provides a ligand contact to substrate. The cysteines at positions 530 and 542 are disulfide-linked. N546 and N601 each carry an N-linked (GlcNAc...) asparagine glycan. Residues 614-805 (ADQSIKVRIS…QNSDDAQTSF (192 aa)) form the Collectrin-like domain. Positions 652 to 659 (REYFSREK) are essential for cleavage by ADAM17. N660 and N690 each carry an N-linked (GlcNAc...) asparagine glycan. The tract at residues 697-716 (RSEVEEAIRMSRGRINDIFG) is essential for cleavage by TMPRSS11D and TMPRSS2. A helical transmembrane segment spans residues 741–761 (IWLIIFGVVMGTVVVGIVILI). At 762-805 (VTGIKGRKKKNETKREENPYDSMDIGKGESNAGFQNSDDAQTSF) the chain is on the cytoplasmic side. Positions 771–805 (KNETKREENPYDSMDIGKGESNAGFQNSDDAQTSF) are disordered. Residues 778–786 (ENPYDSMDI) carry the LIR motif. The residue at position 781 (Y781) is a Phosphotyrosine. The short motif at 781 to 784 (YDSM) is the Endocytic sorting signal element. The SH2-binding motif lies at 781-785 (YDSMD). S783 carries the phosphoserine modification. K788 is covalently cross-linked (Glycyl lysine isopeptide (Lys-Gly) (interchain with G-Cter in ubiquitin)). Residues 792–795 (NAGF) carry the PTB motif. Over residues 793–805 (AGFQNSDDAQTSF) the composition is skewed to polar residues. Positions 803-805 (TSF) match the PDZ-binding motif.

This sequence belongs to the peptidase M2 family. In terms of assembly, homodimer. Interacts with the catalytically active form of TMPRSS2. Interacts with SLC6A19; this interaction is essential for expression and function of SLC6A19 in intestine. Interacts with ITGA5:ITGB1. Probably interacts (via endocytic sorting signal motif) with AP2M1; the interaction is inhibited by phosphorylation of Tyr-781. Interacts (via PDZ-binding motif) with NHERF1 (via PDZ domains); the interaction may enhance ACE2 membrane residence. Zn(2+) is required as a cofactor. It depends on chloride as a cofactor. In terms of processing, glycosylated. Post-translationally, proteolytic cleavage by ADAM17 generates a secreted form. Also cleaved by serine proteases: TMPRSS2, TMPRSS11D and HPN/TMPRSS1. Phosphorylated. Phosphorylation at Tyr-781 probably inhibits interaction with AP2M1 and enables interactions with proteins containing SH2 domains. In terms of processing, ubiquitinated. Ubiquitinated on Lys-788 via 'Lys-48'-linked ubiquitin. 'Lys-48'-linked deubiquitinated by USP50 on the Lys-788; leading to its stabilization. In terms of tissue distribution, expressed in heart, kidney and forebrain. In testis, expression is restricted to Leydig cells. In heart, expressed in endothelial cells from small and large arteries, arterial smooth muscle cells, and myocytes (at protein level). Ubiquitously expressed, with highest levels in ileum, bladder and lung.

Its subcellular location is the secreted. It localises to the cell membrane. The protein localises to the cytoplasm. It is found in the cell projection. The protein resides in the cilium. Its subcellular location is the apical cell membrane. The catalysed reaction is angiotensin II + H2O = angiotensin-(1-7) + L-phenylalanine. The enzyme catalyses angiotensin I + H2O = angiotensin-(1-9) + L-leucine. It carries out the reaction bradykinin(1-8) + H2O = bradykinin(1-7) + L-phenylalanine. It catalyses the reaction neurotensin + H2O = neurotensin-(1-12) + L-leucine. The catalysed reaction is kinetensin + H2O = kinetensin-(1-8) + L-leucine. The enzyme catalyses dynorphin A-(1-13) + H2O = dynorphin A-(1-12) + L-lysine. It carries out the reaction apelin-13 + H2O = apelin-12 + L-phenylalanine. It catalyses the reaction [Pyr1]apelin-13 + H2O = [Pyr1]apelin-12 + L-phenylalanine. The catalysed reaction is apelin-17 + H2O = apelin-16 + L-phenylalanine. With respect to regulation, activated by chloride and fluoride, but not bromide. Inhibited by MLN-4760, cFP_Leu, and EDTA, but not by the ACE inhibitors linosipril, captopril, enalaprilat. Its function is as follows. Essential counter-regulatory carboxypeptidase of the renin-angiotensin hormone system that is a critical regulator of blood volume, systemic vascular resistance, and thus cardiovascular homeostasis. Converts angiotensin I to angiotensin 1-9, a nine-amino acid peptide with anti-hypertrophic effects in cardiomyocytes, and angiotensin II to angiotensin 1-7, which then acts as a beneficial vasodilator and anti-proliferation agent, counterbalancing the actions of the vasoconstrictor angiotensin II. Also removes the C-terminal residue from three other vasoactive peptides, neurotensin, kinetensin, and des-Arg bradykinin, but is not active on bradykinin. Also cleaves other biological peptides, such as apelins, casomorphins and dynorphin A. Plays an important role in amino acid transport by acting as binding partner of amino acid transporter SLC6A19 in intestine, regulating trafficking, expression on the cell surface, and its catalytic activity. This Rattus norvegicus (Rat) protein is Angiotensin-converting enzyme 2 (Ace2).